Here is a 593-residue protein sequence, read N- to C-terminus: MKNIRNFCIIAHIDHGKSTLADRLLEFTKTIQVTEGQMLDDMDLEKERGITIKSHAIQMEYEYGGEKYVLNLIDTPGHVDFSYEVSRSIAACEGALLIVDASQGVQAQTISNLYMALEHDLEIIPVLNKCDMASAMPDEVEDEIIDLLGCKHEDIIRASGKTGMGVEEILKAVVERIPHPTGDEEAPLQALIFDSVFNSFRGIIAYFKIENGVIRKGDKVKFFNTGKEYDADEIGVLKMDMIPRAELRTGDVGYIISGIKTSREVKVGDTITHIARPCEKAIAGFEEVKPMVFAGVYPIEAEDYENLRASLEKLQLNDASLTFQPESSLALGFGFRCGFLGLLHMEIVQERLDREFDMNVITTVPNVSYMVYDKQGHANEVHNPGGMPDPTLIDHIEEPFIDATIITATDYIGPIMTLCLGKRGELVRQNYVSGNRVEIHYKMPLGEIVIDFYDKLKSISKGYASFDYHQSGFRPSKLVKLDILLNGEPVDALSTLTHVDNAYNLGKRMCEKLKELIPRQQFDIAIQAAIGAKIISRETIKAVRKDVTAKCYGGDVSRKRKLLEKQKRGKKRMKQIGNVEVPQKAFLAVLKLD.

Residues 2 to 181 (KNIRNFCIIA…AVVERIPHPT (180 aa)) form the tr-type G domain. GTP is bound by residues 14–19 (DHGKST) and 128–131 (NKCD).

It belongs to the TRAFAC class translation factor GTPase superfamily. Classic translation factor GTPase family. LepA subfamily.

The protein localises to the cell inner membrane. It carries out the reaction GTP + H2O = GDP + phosphate + H(+). Functionally, required for accurate and efficient protein synthesis under certain stress conditions. May act as a fidelity factor of the translation reaction, by catalyzing a one-codon backward translocation of tRNAs on improperly translocated ribosomes. Back-translocation proceeds from a post-translocation (POST) complex to a pre-translocation (PRE) complex, thus giving elongation factor G a second chance to translocate the tRNAs correctly. Binds to ribosomes in a GTP-dependent manner. The polypeptide is Elongation factor 4 (Phocaeicola vulgatus (strain ATCC 8482 / DSM 1447 / JCM 5826 / CCUG 4940 / NBRC 14291 / NCTC 11154) (Bacteroides vulgatus)).